A 305-amino-acid polypeptide reads, in one-letter code: Coiled-coil domain-containing protein 50 (305 aa).

Position 2 is an N-acetylalanine (alanine 2). Serine 5 carries the phosphoserine modification. Residues 86 to 130 adopt a coiled-coil conformation; the sequence is EIAQEIQEKLTIEAERRRIQEKKDEDIARLLQEKELQEEKRRKKH. Disordered stretches follow at residues 122–142 and 218–305; these read QEEK…VFGD and KKAK…HNKQ. 2 stretches are compositionally biased toward basic and acidic residues: residues 218 to 239 and 247 to 263; these read KKAK…ECKL and KSKE…DRPS. A compositionally biased stretch (polar residues) spans 279–305; it reads THFTNQHSTTWHLPKSESSQKGFHNKQ.

As to quaternary structure, interacts with RNF126. Phosphorylated on tyrosine residues. In terms of tissue distribution, widely expressed.

It localises to the cytoplasm. In terms of biological role, involved in EGFR signaling. The chain is Coiled-coil domain-containing protein 50 (Ccdc50) from Mus musculus (Mouse).